The chain runs to 623 residues: uncharacterized protein (623 aa).

The GAF domain occupies 28-171; sequence TSAEVSQRVL…TIATLFAQVQ (144 aa). Residues 212 to 345 enclose the GGDEF domain; that stretch reads GPVAALFLDL…GGDSVAIFTA (134 aa). Residues 354 to 609 form the EAL domain; sequence RNDIELHLRR…AMRHMLSARR (256 aa).

This is an uncharacterized protein from Mycobacterium tuberculosis (strain CDC 1551 / Oshkosh).